Consider the following 544-residue polypeptide: Chaperonin GroEL 1 (544 aa).

Residues 29–32 (TLGP), 86–90 (DGTTT), Gly-413, 479–481 (NAA), and Asp-495 each bind ATP.

The protein belongs to the chaperonin (HSP60) family. Forms a cylinder of 14 subunits composed of two heptameric rings stacked back-to-back. Interacts with the co-chaperonin GroES.

Its subcellular location is the cytoplasm. The catalysed reaction is ATP + H2O + a folded polypeptide = ADP + phosphate + an unfolded polypeptide.. Together with its co-chaperonin GroES, plays an essential role in assisting protein folding. The GroEL-GroES system forms a nano-cage that allows encapsulation of the non-native substrate proteins and provides a physical environment optimized to promote and accelerate protein folding. The sequence is that of Chaperonin GroEL 1 from Trichormus variabilis (strain ATCC 29413 / PCC 7937) (Anabaena variabilis).